Consider the following 352-residue polypeptide: Ion-translocating oxidoreductase complex subunit D (352 aa).

4 consecutive transmembrane segments (helical) span residues 20 to 40, 42 to 62, 69 to 91, and 123 to 143; these read IMLL…WFFG, GTLF…AIVL, VASH…SIPP, and PAMI…TSWL. Thr-187 is modified (FMN phosphoryl threonine). The next 5 helical transmembrane spans lie at 215–235, 242–262, 267–287, 301–321, and 322–342; these read LAGV…VFLL, WHIP…GWLF, LASP…FFIL, LIFG…GGYP, and DGVA…DYYT.

This sequence belongs to the NqrB/RnfD family. As to quaternary structure, the complex is composed of six subunits: RsxA, RsxB, RsxC, RsxD, RsxE and RsxG. It depends on FMN as a cofactor.

The protein localises to the cell inner membrane. Part of a membrane-bound complex that couples electron transfer with translocation of ions across the membrane. Required to maintain the reduced state of SoxR. This Salmonella choleraesuis (strain SC-B67) protein is Ion-translocating oxidoreductase complex subunit D.